The sequence spans 403 residues: S-adenosylmethionine:tRNA ribosyltransferase-isomerase (403 aa).

Belongs to the QueA family. In terms of assembly, monomer.

Its subcellular location is the cytoplasm. The catalysed reaction is 7-aminomethyl-7-carbaguanosine(34) in tRNA + S-adenosyl-L-methionine = epoxyqueuosine(34) in tRNA + adenine + L-methionine + 2 H(+). Its pathway is tRNA modification; tRNA-queuosine biosynthesis. In terms of biological role, transfers and isomerizes the ribose moiety from AdoMet to the 7-aminomethyl group of 7-deazaguanine (preQ1-tRNA) to give epoxyqueuosine (oQ-tRNA). This chain is S-adenosylmethionine:tRNA ribosyltransferase-isomerase, found in Psychrobacter arcticus (strain DSM 17307 / VKM B-2377 / 273-4).